The chain runs to 194 residues: MNDEEQDDKTKELPLGKETEANLFKSRSIFIYGPINQELAQKVCSQLVALAAASDEDIRIYVNSPGGHVESGDSIHDMVKFIKPKVWMIGTGWVASAGALIYVAAPRERRLCLPNTRFLLHQPSGGTRGMASDIEIQAREIIKMNERLNKIMAEATGQPLEKIAKDTDRDYWLSAEEAKDYGLVSRIVTSQADI.

The Nucleophile role is filled by serine 96. Histidine 121 is a catalytic residue.

This sequence belongs to the peptidase S14 family. In terms of assembly, fourteen ClpP subunits assemble into 2 heptameric rings which stack back to back to give a disk-like structure with a central cavity, resembling the structure of eukaryotic proteasomes.

Its subcellular location is the cytoplasm. The catalysed reaction is Hydrolysis of proteins to small peptides in the presence of ATP and magnesium. alpha-casein is the usual test substrate. In the absence of ATP, only oligopeptides shorter than five residues are hydrolyzed (such as succinyl-Leu-Tyr-|-NHMec, and Leu-Tyr-Leu-|-Tyr-Trp, in which cleavage of the -Tyr-|-Leu- and -Tyr-|-Trp bonds also occurs).. Cleaves peptides in various proteins in a process that requires ATP hydrolysis. Has a chymotrypsin-like activity. Plays a major role in the degradation of misfolded proteins. The chain is ATP-dependent Clp protease proteolytic subunit 3 from Rhizobium etli (strain ATCC 51251 / DSM 11541 / JCM 21823 / NBRC 15573 / CFN 42).